The chain runs to 432 residues: Trigger factor (432 aa).

In terms of domain architecture, PPIase FKBP-type spans 161 to 246 (EDRVTLDFTG…LKKVEERELP (86 aa)).

It belongs to the FKBP-type PPIase family. Tig subfamily.

Its subcellular location is the cytoplasm. The enzyme catalyses [protein]-peptidylproline (omega=180) = [protein]-peptidylproline (omega=0). Its function is as follows. Involved in protein export. Acts as a chaperone by maintaining the newly synthesized protein in an open conformation. Functions as a peptidyl-prolyl cis-trans isomerase. The polypeptide is Trigger factor (Salmonella arizonae (strain ATCC BAA-731 / CDC346-86 / RSK2980)).